A 489-amino-acid chain; its full sequence is Probable apyrase 1 (489 aa).

Residues 1 to 28 (MRRFSAAAGARQQQQQGEAVSDRVLRFR) are Cytoplasmic-facing. The chain crosses the membrane as a helical; Signal-anchor for type II membrane protein span at residues 29-49 (GVLVVVLAPVLLISLVLLLMP). Over 50-489 (RAPASATVEG…GSAIEVASSS (440 aa)) the chain is Extracellular. 89–99 (VIFDAGSSGSR) lines the ATP pocket. Glu-211 acts as the Proton acceptor in catalysis. 235-245 (GVVDLGGGSVQ) lines the ATP pocket.

Belongs to the GDA1/CD39 NTPase family. Requires Ca(2+) as cofactor.

It is found in the membrane. It carries out the reaction a ribonucleoside 5'-triphosphate + 2 H2O = a ribonucleoside 5'-phosphate + 2 phosphate + 2 H(+). Its function is as follows. Catalyzes the hydrolysis of phosphoanhydride bonds of nucleoside tri- and di-phosphates. This Oryza sativa subsp. japonica (Rice) protein is Probable apyrase 1 (APY1).